Reading from the N-terminus, the 569-residue chain is Dihydroorotate dehydrogenase (quinone), mitochondrial (569 aa).

Residues 1–23 (MISKLKPQFMFLPKKHILSYCRK) constitute a mitochondrion transit peptide. A helical membrane pass occupies residues 143-163 (IIFLLFVSLFGLYGFFESYNP). FMN-binding positions include 225–229 (AGFDK) and T249. Residue K229 coordinates substrate. Substrate contacts are provided by residues 274-278 (NSCGF) and N342. Position 342 (N342) interacts with FMN. S345 serves as the catalytic Nucleophile. Residue N347 coordinates substrate. K429 is an FMN binding site. 458–459 (NT) is a substrate binding site. FMN contacts are provided by residues 477–478 (SG), 505–507 (SGG), and 528–529 (YS).

The protein belongs to the dihydroorotate dehydrogenase family. Type 2 subfamily. As to quaternary structure, monomer. FMN serves as cofactor.

It localises to the mitochondrion inner membrane. It carries out the reaction (S)-dihydroorotate + a quinone = orotate + a quinol. The protein operates within pyrimidine metabolism; UMP biosynthesis via de novo pathway; orotate from (S)-dihydroorotate (quinone route): step 1/1. Functionally, catalyzes the conversion of dihydroorotate to orotate with quinone as electron acceptor. The polypeptide is Dihydroorotate dehydrogenase (quinone), mitochondrial (Plasmodium falciparum (isolate 3D7)).